The chain runs to 144 residues: Transmembrane protein 170A (144 aa).

Residues 1–50 are Extracellular-facing; sequence MEREGSGGGGGSAGLLQQILSLKLVPRVGNGTLCPNSTSLCSFPEMWYGV. Asn30 and Asn36 each carry an N-linked (GlcNAc...) asparagine glycan. A helical transmembrane segment spans residues 51 to 71; sequence FLWALMSSVFFHVPAGLLALF. The Cytoplasmic portion of the chain corresponds to 72 to 85; sequence TLRHHKYGRFMSVS. The helical transmembrane segment at 86–106 threads the bilayer; the sequence is ILLMGIVGPITAGILTSAAIA. Residues 107 to 116 are Extracellular-facing; sequence GVYRAAGKEM. A helical membrane pass occupies residues 117–137; that stretch reads IPFEALTLGTGQTFCVVVVSF. Topologically, residues 138–144 are cytoplasmic; it reads LRVLATL.

The protein belongs to the TMEM170 family. Interacts with RTN4.

Its subcellular location is the endoplasmic reticulum membrane. The protein localises to the nucleus envelope. Its function is as follows. Acts as a regulator of endoplasmic reticulum (ER) and nuclear envelope (NE) morphogenesis. Affects the ratio between tubular ER and ER sheets by promoting sheet formation at the expense of tubules. Influences NE expansion, nuclear pore complex formation and proper localization of inner nuclear membrane proteins. This Mus musculus (Mouse) protein is Transmembrane protein 170A (Tmem170a).